We begin with the raw amino-acid sequence, 218 residues long: 3,4-dihydroxy-2-butanone 4-phosphate synthase (218 aa).

D-ribulose 5-phosphate-binding positions include 37 to 38 (RE), Asp42, 150 to 154 (RGGHT), and Glu174. Glu38 serves as a coordination point for Mg(2+). His153 is a Mg(2+) binding site.

Belongs to the DHBP synthase family. As to quaternary structure, homodimer. Requires Mg(2+) as cofactor. It depends on Mn(2+) as a cofactor.

It catalyses the reaction D-ribulose 5-phosphate = (2S)-2-hydroxy-3-oxobutyl phosphate + formate + H(+). Its pathway is cofactor biosynthesis; riboflavin biosynthesis; 2-hydroxy-3-oxobutyl phosphate from D-ribulose 5-phosphate: step 1/1. In terms of biological role, catalyzes the conversion of D-ribulose 5-phosphate to formate and 3,4-dihydroxy-2-butanone 4-phosphate. This chain is 3,4-dihydroxy-2-butanone 4-phosphate synthase, found in Erwinia tasmaniensis (strain DSM 17950 / CFBP 7177 / CIP 109463 / NCPPB 4357 / Et1/99).